The sequence spans 704 residues: Serotransferrin (704 aa).

The N-terminal stretch at 1 to 19 (MRPAVRALLACAVLGLCLA) is a signal peptide. Transferrin-like domains are found at residues 25-351 (VRWC…NLRE) and 364-689 (VKWC…NLRQ). Disulfide bonds link Cys28–Cys66 and Cys38–Cys57. Arg42 is subject to Dimethylated arginine. Fe(3+) contacts are provided by Asp81 and Tyr113. Cystine bridges form between Cys136-Cys217, Cys176-Cys192, Cys179-Cys200, Cys189-Cys202, and Cys250-Cys264. Thr138, Arg142, Ala144, and Gly145 together coordinate hydrogencarbonate. Fe(3+) is bound at residue Tyr211. His272 is a Fe(3+) binding site. Disulfide bonds link Cys362-Cys622, Cys367-Cys399, Cys377-Cys390, Cys424-Cys699, Cys441-Cys663, Cys473-Cys549, Cys497-Cys690, Cys507-Cys521, Cys518-Cys532, Cys589-Cys603, and Cys641-Cys646. Positions 414 and 449 each coordinate Fe(3+). Hydrogencarbonate-binding residues include Thr475, Arg479, Ala481, and Gly482. N-linked (GlcNAc...) asparagine glycosylation occurs at Asn514. Tyr543 is a binding site for Fe(3+). Residue His611 coordinates Fe(3+). Phosphoserine is present on Ser691.

The protein belongs to the transferrin family. Monomer. Part of a complex composed of SLC40A1/ferroportin, TF/transferrin and HEPH/hephaestin that transfers iron from cells to transferrin. In terms of tissue distribution, expressed by the liver and secreted in plasma.

The protein localises to the secreted. Transferrins are iron binding transport proteins which can bind two Fe(3+) ions in association with the binding of an anion, usually bicarbonate. It is responsible for the transport of iron from sites of absorption and heme degradation to those of storage and utilization. Serum transferrin may also have a further role in stimulating cell proliferation. This is Serotransferrin (TF) from Bos taurus (Bovine).